Consider the following 512-residue polypeptide: ETS translocation variant 3 (512 aa).

Positions 35 to 116 form a DNA-binding region, ETS; sequence IQLWHFILEL…KGKRFTYKFN (82 aa). Positions 136–222 are disordered; sequence VPQSAPPVPT…NAIGGGGIGH (87 aa). Ser139, Ser159, and Ser315 each carry phosphoserine. Positions 158-184 are enriched in polar residues; that stretch reads HSPTNDVQPGRFSASSLTASGQESSNG. Residues 336 to 512 are disordered; that stretch reads PEESTQFSIK…QGLATAAADA (177 aa). Over residues 380–406 the composition is skewed to basic and acidic residues; sequence IKVEPASEKDPESLRQSAREKEEHTQE. Residue Lys381 forms a Glycyl lysine isopeptide (Lys-Gly) (interchain with G-Cter in SUMO2) linkage. An N6-acetyllysine; alternate modification is found at Lys388. A Glycyl lysine isopeptide (Lys-Gly) (interchain with G-Cter in SUMO2); alternate cross-link involves residue Lys388. A compositionally biased stretch (acidic residues) spans 443–452; it reads EPLEVTEDIE. Composition is skewed to basic and acidic residues over residues 453 to 468 and 479 to 491; these read DRPGKEPSAPEKKEDA and RWNDDPEARELSK.

Belongs to the ETS family.

Its subcellular location is the nucleus. Functionally, transcriptional repressor that contribute to growth arrest during terminal macrophage differentiation by repressing target genes involved in Ras-dependent proliferation. Represses MMP1 promoter activity. The polypeptide is ETS translocation variant 3 (ETV3) (Pan troglodytes (Chimpanzee)).